The following is a 322-amino-acid chain: Crystallin J1A (322 aa).

It belongs to the ADP-ribosylglycohydrolase family. J1 crystallin subfamily. As to expression, expressed in the rhopalia. Present in both the large and small eyes.

This is Crystallin J1A from Tripedalia cystophora (Jellyfish).